A 73-amino-acid chain; its full sequence is Mitofissin (73 aa).

It belongs to the ?ATG44? family. Homooligomer. Found as homooctamer in solution, but binds to membranes either as a monomer, dimer, or tetramer, not as an octamer.

It is found in the mitochondrion intermembrane space. The protein resides in the vacuole. Its function is as follows. Mitochondrial fission factor that acts directly on lipid membranes to drive mitochondrial fission required for mitophagy. Directly binds to lipid membranes and brings about lipid membrane fragility to facilitate membrane fission and engulfment of mitochondria by the phagophore. The protein is Mitofissin of Saccharomyces cerevisiae (strain ATCC 204508 / S288c) (Baker's yeast).